Reading from the N-terminus, the 100-residue chain is Integration host factor subunit beta (100 aa).

Residues 53–100 (LHHRPPRIGRNPKTGEPVALPGKYVPHFKPGKELRDRVNAGRHNPIQS) form a disordered region. Basic and acidic residues predominate over residues 82-91 (PGKELRDRVN).

The protein belongs to the bacterial histone-like protein family. Heterodimer of an alpha and a beta chain.

Its function is as follows. This protein is one of the two subunits of integration host factor, a specific DNA-binding protein that functions in genetic recombination as well as in transcriptional and translational control. The protein is Integration host factor subunit beta of Alkalilimnicola ehrlichii (strain ATCC BAA-1101 / DSM 17681 / MLHE-1).